The chain runs to 185 residues: Capsid protein (185 aa).

The tract at residues 136-185 (NAPILSTLPETTVVRRRDRGRSPRRRTPSPRRRRSQSPRRRRSQSRESQC) is disordered. The segment covering 149 to 178 (VRRRDRGRSPRRRTPSPRRRRSQSPRRRRS) has biased composition (basic residues). Phosphoserine; by host is present on residues Ser157, Ser164, and Ser172. The stretch at 157–163 (SPRRRTP) is one 1; half-length repeat. A 3 X 8 AA repeats of S-P-R-R-R-[PR]-S-Q region spans residues 157 to 179 (SPRRRTPSPRRRRSQSPRRRRSQ). The Bipartite nuclear localization signal signature appears at 160 to 177 (RRTPSPRRRRSQSPRRRR). 2 tandem repeats follow at residues 164–171 (SPRRRRSQ) and 172–179 (SPRRRRSQ). The interval 179–185 (QSRESQC) is RNA binding.

The protein belongs to the orthohepadnavirus core antigen family. In terms of assembly, homodimerizes, then multimerizes. Interacts with cytosol exposed regions of viral L glycoprotein present in the reticulum-to-Golgi compartment. Interacts with human FLNB. Phosphorylated form interacts with host importin alpha; this interaction depends on the exposure of the NLS, which itself depends upon genome maturation and/or phosphorylation of the capsid protein. Interacts with host NUP153. Post-translationally, phosphorylated by host SRPK1, SRPK2, and maybe protein kinase C or GAPDH. Phosphorylation is critical for pregenomic RNA packaging. Protein kinase C phosphorylation is stimulated by HBx protein and may play a role in transport of the viral genome to the nucleus at the late step during the viral replication cycle.

The protein resides in the virion. The protein localises to the host cytoplasm. Self assembles to form an icosahedral capsid. Most capsids appear to be large particles with an icosahedral symmetry of T=4 and consist of 240 copies of capsid protein, though a fraction forms smaller T=3 particles consisting of 180 capsid proteins. Entering capsids are transported along microtubules to the nucleus. Phosphorylation of the capsid is thought to induce exposure of nuclear localization signal in the C-terminal portion of the capsid protein that allows binding to the nuclear pore complex via the importin (karyopherin-) alpha and beta. Capsids are imported in intact form through the nuclear pore into the nuclear basket, where it probably binds NUP153. Only capsids that contain the mature viral genome can release the viral DNA and capsid protein into the nucleoplasm. Immature capsids get stuck in the basket. Capsids encapsulate the pre-genomic RNA and the P protein. Pre-genomic RNA is reverse-transcribed into DNA while the capsid is still in the cytoplasm. The capsid can then either be directed to the nucleus, providing more genomes for transcription, or bud through the endoplasmic reticulum to provide new virions. The polypeptide is Capsid protein (Homo sapiens (Human)).